The following is a 243-amino-acid chain: PF03932 family protein CutC (243 aa).

The protein belongs to the CutC family.

Its subcellular location is the cytoplasm. The chain is PF03932 family protein CutC from Glaesserella parasuis serovar 5 (strain SH0165) (Haemophilus parasuis).